A 501-amino-acid chain; its full sequence is MEFSVKSGSPEKQRSACIVVGVFEPRRLSGTAEQLDEISEGYISNLLRKGDLEGKSGQMLLLHHVPNILSERVLLVGCGKERELDERQYRQIITKTINTLNETGSMEAVCFLSELHVKGRDIYWKVRQAVEAAQDGLYSFDSLKTRKAEARRPLRKVVFNVPTRRELPIGERAVSHALAIAEGITTCKNVANMPPNICNPAYLAEQAKILENDYDKVTTTIVDEKEMEELGMGSYLAVGRGSVNESLMSIIKYDGAGDDSKPLVLVGKGLTFDSGGISLKPGAGMDEMKYDMGGAAGVLGAMHALVELNLPINVIGVLAGCENMPSSNAYRPGDILTTMSGQTVEVLNTDAEGRLVLCDALTYVERFNPEAVIDVATLTGACVVALGAHATGLLSSHNPLAHELLNASEQSGDRAWRMPLWDDYQDQLESPFADFTNLGGKEAGTITAACFLSRFTKKYNWAHLDIAGTAWRSGKNKGATGRPVSMLTQFLLNRSGQEQGE.

Mn(2+)-binding residues include Lys268 and Asp273. Lys280 is a catalytic residue. Asp291, Asp350, and Glu352 together coordinate Mn(2+). Arg354 is an active-site residue.

Belongs to the peptidase M17 family. Mn(2+) serves as cofactor.

Its subcellular location is the cytoplasm. It catalyses the reaction Release of an N-terminal amino acid, Xaa-|-Yaa-, in which Xaa is preferably Leu, but may be other amino acids including Pro although not Arg or Lys, and Yaa may be Pro. Amino acid amides and methyl esters are also readily hydrolyzed, but rates on arylamides are exceedingly low.. The enzyme catalyses Release of an N-terminal amino acid, preferentially leucine, but not glutamic or aspartic acids.. In terms of biological role, presumably involved in the processing and regular turnover of intracellular proteins. Catalyzes the removal of unsubstituted N-terminal amino acids from various peptides. This chain is Probable cytosol aminopeptidase, found in Colwellia psychrerythraea (strain 34H / ATCC BAA-681) (Vibrio psychroerythus).